The following is a 273-amino-acid chain: Rhamnulose-1-phosphate aldolase (273 aa).

Residue Glu-117 is part of the active site. Zn(2+)-binding residues include His-140, His-142, and His-211.

The protein belongs to the aldolase class II family. RhaD subfamily. The cofactor is Zn(2+).

It is found in the cytoplasm. It carries out the reaction L-rhamnulose 1-phosphate = (S)-lactaldehyde + dihydroxyacetone phosphate. Its pathway is carbohydrate degradation; L-rhamnose degradation; glycerone phosphate from L-rhamnose: step 3/3. Functionally, catalyzes the reversible cleavage of L-rhamnulose-1-phosphate to dihydroxyacetone phosphate (DHAP) and L-lactaldehyde. The polypeptide is Rhamnulose-1-phosphate aldolase (Listeria monocytogenes serotype 4b (strain F2365)).